The following is a 305-amino-acid chain: Glutaminase 2 (305 aa).

Residues S61, N113, E158, N165, Y189, Y241, and V259 each coordinate substrate.

It belongs to the glutaminase family. In terms of assembly, homotetramer.

The enzyme catalyses L-glutamine + H2O = L-glutamate + NH4(+). The protein is Glutaminase 2 of Clostridium perfringens (strain 13 / Type A).